The chain runs to 416 residues: uncharacterized protein (416 aa).

This is an uncharacterized protein from Methanocaldococcus jannaschii (strain ATCC 43067 / DSM 2661 / JAL-1 / JCM 10045 / NBRC 100440) (Methanococcus jannaschii).